A 626-amino-acid polypeptide reads, in one-letter code: tRNA uridine 5-carboxymethylaminomethyl modification enzyme MnmG (626 aa).

An FAD-binding site is contributed by 13 to 18 (GGGHAG). 273–287 (GPRYCPSIEDKIHRF) contributes to the NAD(+) binding site.

The protein belongs to the MnmG family. As to quaternary structure, homodimer. Heterotetramer of two MnmE and two MnmG subunits. It depends on FAD as a cofactor.

Its subcellular location is the cytoplasm. In terms of biological role, NAD-binding protein involved in the addition of a carboxymethylaminomethyl (cmnm) group at the wobble position (U34) of certain tRNAs, forming tRNA-cmnm(5)s(2)U34. The chain is tRNA uridine 5-carboxymethylaminomethyl modification enzyme MnmG from Acinetobacter baylyi (strain ATCC 33305 / BD413 / ADP1).